The following is a 143-amino-acid chain: Large ribosomal subunit protein bL17 (143 aa).

This sequence belongs to the bacterial ribosomal protein bL17 family. In terms of assembly, part of the 50S ribosomal subunit. Contacts protein L32.

The protein is Large ribosomal subunit protein bL17 of Bartonella quintana (strain Toulouse) (Rochalimaea quintana).